The following is a 648-amino-acid chain: p-hydroxybenzoic acid efflux pump subunit AaeB (648 aa).

The next 11 membrane-spanning stretches (helical) occupy residues 11–31, 41–61, 65–87, 91–110, 125–145, 150–170, 369–389, 406–426, 430–450, 455–474, and 481–501; these read FACK…YFGL, AALV…AGAI, GWLR…MLLI, LLMI…LSSL, TALI…QLAL, EIVL…PRSV, LFWL…IAVV, FLMG…VILP, QSLV…GMEV, LGSL…SNPM, and FVDS…VLLA.

The protein belongs to the aromatic acid exporter ArAE (TC 2.A.85) family.

Its subcellular location is the cell inner membrane. In terms of biological role, forms an efflux pump with AaeA. Could function as a metabolic relief valve, allowing to eliminate certain compounds when they accumulate to high levels in the cell. The protein is p-hydroxybenzoic acid efflux pump subunit AaeB (aaeB) of Edwardsiella tarda (strain FL6-60).